A 734-amino-acid chain; its full sequence is Photosystem I P700 chlorophyll a apoprotein A2 (734 aa).

8 consecutive transmembrane segments (helical) span residues 46-69 (IFAS…FHVA), 135-158 (LYTG…LHLQ), 175-199 (LNHH…HVAI), 273-291 (IAHH…GHMY), 330-353 (IHFQ…QHMY), 369-395 (AALY…IFFI), 417-439 (AIIS…LYVH), and 517-535 (FLVH…LILV). Residues Cys559 and Cys568 each coordinate [4Fe-4S] cluster. 2 helical membrane passes run 575–596 (AFYL…YWHW) and 643–665 (LSVW…MFLI). His654, Met662, and Tyr670 together coordinate chlorophyll a. Trp671 lines the phylloquinone pocket. A helical transmembrane segment spans residues 707–727 (LVGLAHFSVGYIFTYAAFLIA).

This sequence belongs to the PsaA/PsaB family. As to quaternary structure, the PsaA/B heterodimer binds the P700 chlorophyll special pair and subsequent electron acceptors. PSI consists of a core antenna complex that captures photons, and an electron transfer chain that converts photonic excitation into a charge separation. The eukaryotic PSI reaction center is composed of at least 11 subunits. It depends on P700 is a chlorophyll a/chlorophyll a' dimer, A0 is one or more chlorophyll a, A1 is one or both phylloquinones and FX is a shared 4Fe-4S iron-sulfur center. as a cofactor.

Its subcellular location is the plastid. It is found in the chloroplast thylakoid membrane. It catalyses the reaction reduced [plastocyanin] + hnu + oxidized [2Fe-2S]-[ferredoxin] = oxidized [plastocyanin] + reduced [2Fe-2S]-[ferredoxin]. Functionally, psaA and PsaB bind P700, the primary electron donor of photosystem I (PSI), as well as the electron acceptors A0, A1 and FX. PSI is a plastocyanin-ferredoxin oxidoreductase, converting photonic excitation into a charge separation, which transfers an electron from the donor P700 chlorophyll pair to the spectroscopically characterized acceptors A0, A1, FX, FA and FB in turn. Oxidized P700 is reduced on the lumenal side of the thylakoid membrane by plastocyanin. This chain is Photosystem I P700 chlorophyll a apoprotein A2, found in Aethionema grandiflorum (Persian stone-cress).